Reading from the N-terminus, the 277-residue chain is Inorganic pyrophosphatase (277 aa).

Position 80 (Arg80) interacts with diphosphate. Mg(2+)-binding residues include Asp117, Asp122, and Asp154.

This sequence belongs to the PPase family. It depends on Mg(2+) as a cofactor.

It localises to the cytoplasm. The catalysed reaction is diphosphate + H2O = 2 phosphate + H(+). In terms of biological role, involved in osmoadaptation. The chain is Inorganic pyrophosphatase (IPP1) from Encephalitozoon cuniculi (strain GB-M1) (Microsporidian parasite).